The following is a 313-amino-acid chain: N-acetyl-gamma-glutamyl-phosphate reductase (313 aa).

Residue cysteine 117 is part of the active site.

This sequence belongs to the NAGSA dehydrogenase family. Type 2 subfamily.

Its subcellular location is the cytoplasm. It carries out the reaction N-acetyl-L-glutamate 5-semialdehyde + phosphate + NADP(+) = N-acetyl-L-glutamyl 5-phosphate + NADPH + H(+). It functions in the pathway amino-acid biosynthesis; L-arginine biosynthesis; N(2)-acetyl-L-ornithine from L-glutamate: step 3/4. Functionally, catalyzes the NADPH-dependent reduction of N-acetyl-5-glutamyl phosphate to yield N-acetyl-L-glutamate 5-semialdehyde. This chain is N-acetyl-gamma-glutamyl-phosphate reductase, found in Burkholderia cenocepacia (strain ATCC BAA-245 / DSM 16553 / LMG 16656 / NCTC 13227 / J2315 / CF5610) (Burkholderia cepacia (strain J2315)).